The chain runs to 658 residues: MSDVRVIIQRDSEREEHVVTTGTTAGELFPGQRTVVAARIGGELKDLSYELRDGESVEPVEISSEDGLNILRHSTAHVMAQAVQELFPEAKLGIGPPVKDGFYYDFDVEKPFTPEDLKAIEKKMQEIQKRGQKFSRRVVSDEAAREELADEPYKLELIGIKGSASSDDGADVEVGGGELTIYDNLDPKTGDLCWKDLCRGPHLPTTRFIPAFKLMRNAAAYWRGSEKNPMLQRIYGTAWPTKDELKAHLEFLEEAAKRDHRKLGNELDLFSFPDEIGPGLAVFHPKGGVIRRAMEDYSRRRHEEEGYEFVYSPHATKGKLFEKSGHLDWYADGMYPPMQLDDGVDYYLKPMNCPMHNLIFDARGRSYRELPLRLFEFGTVYRYEKSGVVHGLTRSRGFTQDDAHIYCTKEQMAEELDRTLTFVLNLLRDYGLTDFYLELSTKDPEKYVGSDETWEEATETLRQVAEKQGLPLVPDPGGAAFYGPKISVQCKDAIGRTWQMSTVQLDFNLPERFDLEYTGPDGSKQRPVMIHRALFGSIERFFAVLLEHYAGAFPVWLAPVQAVGIPIGDAHIPYLQEFAAKARKQGLRVDVDASSDRMQKKIRNQQKNKVPFMIIAGDEDMANGAVSFRYRDGSQENGIPVDEAIAKIAKAVEDRVQV.

Residues 1–61 enclose the TGS domain; sequence MSDVRVIIQR…RDGESVEPVE (61 aa). The tract at residues 259 to 554 is catalytic; sequence DHRKLGNELD…LLEHYAGAFP (296 aa). Zn(2+)-binding residues include Cys353, His404, and His531.

This sequence belongs to the class-II aminoacyl-tRNA synthetase family. Homodimer. Zn(2+) serves as cofactor.

The protein localises to the cytoplasm. It catalyses the reaction tRNA(Thr) + L-threonine + ATP = L-threonyl-tRNA(Thr) + AMP + diphosphate + H(+). Its function is as follows. Catalyzes the attachment of threonine to tRNA(Thr) in a two-step reaction: L-threonine is first activated by ATP to form Thr-AMP and then transferred to the acceptor end of tRNA(Thr). Also edits incorrectly charged L-seryl-tRNA(Thr). The polypeptide is Threonine--tRNA ligase (Streptomyces griseus subsp. griseus (strain JCM 4626 / CBS 651.72 / NBRC 13350 / KCC S-0626 / ISP 5235)).